The following is a 558-amino-acid chain: Leucine-rich repeat-containing protein 71 (558 aa).

The segment covering Met1–Gly18 has biased composition (low complexity). 2 disordered regions span residues Met1–Glu55 and Arg86–Cys112. Over residues Lys28–Thr38 the composition is skewed to basic and acidic residues. Residues Arg86–Glu99 are compositionally biased toward polar residues. LRR repeat units follow at residues Thr196–Met216, Thr221–Gly241, Thr253–Asp274, and Ser281–Glu302. Positions Gly325–Val415 are disordered. Composition is skewed to basic and acidic residues over residues Gly339 to Ser348 and Lys380 to Leu391.

The chain is Leucine-rich repeat-containing protein 71 (Lrrc71) from Mus musculus (Mouse).